Reading from the N-terminus, the 81-residue chain is UPF0729 protein C18orf32 homolog (81 aa).

The segment covering alanine 45–threonine 58 has biased composition (polar residues). Residues alanine 45–aspartate 81 are disordered.

Belongs to the UPF0729 family.

This chain is UPF0729 protein C18orf32 homolog, found in Anoplopoma fimbria (Sablefish).